The chain runs to 481 residues: 6-phosphogluconate dehydrogenase, decarboxylating (481 aa).

Residues Gly11–Gly16, Asn34–Thr36, Val76–Ala78, and Asn104 contribute to the NADP(+) site. Substrate-binding positions include Asn104 and Ser130–Gly132. Lys184 functions as the Proton acceptor in the catalytic mechanism. His187 to Asn188 provides a ligand contact to substrate. The Proton donor role is filled by Glu191. Positions 192, 259, 286, 445, and 451 each coordinate substrate.

Belongs to the 6-phosphogluconate dehydrogenase family. As to quaternary structure, homodimer.

It catalyses the reaction 6-phospho-D-gluconate + NADP(+) = D-ribulose 5-phosphate + CO2 + NADPH. The protein operates within carbohydrate degradation; pentose phosphate pathway; D-ribulose 5-phosphate from D-glucose 6-phosphate (oxidative stage): step 3/3. Functionally, catalyzes the oxidative decarboxylation of 6-phosphogluconate to ribulose 5-phosphate and CO(2), with concomitant reduction of NADP to NADPH. The chain is 6-phosphogluconate dehydrogenase, decarboxylating (Pgd) from Drosophila melanogaster (Fruit fly).